Here is a 194-residue protein sequence, read N- to C-terminus: Holliday junction branch migration complex subunit RuvA (194 aa).

The tract at residues 1 to 64 is domain I; the sequence is MIGRLRGILA…EDSVSLYGFL (64 aa). Residues 65 to 140 form a domain II region; sequence REGERRLFRD…RAADFSSGAP (76 aa). Residues 140–144 form a flexible linker region; sequence PITGQ. Residues 145 to 194 are domain III; sequence LGPDAVSEATVALQQLGYKPAEAARMARDAGAEGDEVATVIRKALQAALR.

The protein belongs to the RuvA family. In terms of assembly, homotetramer. Forms an RuvA(8)-RuvB(12)-Holliday junction (HJ) complex. HJ DNA is sandwiched between 2 RuvA tetramers; dsDNA enters through RuvA and exits via RuvB. An RuvB hexamer assembles on each DNA strand where it exits the tetramer. Each RuvB hexamer is contacted by two RuvA subunits (via domain III) on 2 adjacent RuvB subunits; this complex drives branch migration. In the full resolvosome a probable DNA-RuvA(4)-RuvB(12)-RuvC(2) complex forms which resolves the HJ.

It is found in the cytoplasm. Functionally, the RuvA-RuvB-RuvC complex processes Holliday junction (HJ) DNA during genetic recombination and DNA repair, while the RuvA-RuvB complex plays an important role in the rescue of blocked DNA replication forks via replication fork reversal (RFR). RuvA specifically binds to HJ cruciform DNA, conferring on it an open structure. The RuvB hexamer acts as an ATP-dependent pump, pulling dsDNA into and through the RuvAB complex. HJ branch migration allows RuvC to scan DNA until it finds its consensus sequence, where it cleaves and resolves the cruciform DNA. The polypeptide is Holliday junction branch migration complex subunit RuvA (Xanthomonas axonopodis pv. citri (strain 306)).